The primary structure comprises 281 residues: Sulfur carrier protein FdhD (281 aa).

Cysteine 127 functions as the Cysteine persulfide intermediate in the catalytic mechanism. Residue 264 to 269 (FAREGR) coordinates Mo-bis(molybdopterin guanine dinucleotide).

The protein belongs to the FdhD family.

The protein localises to the cytoplasm. Functionally, required for formate dehydrogenase (FDH) activity. Acts as a sulfur carrier protein that transfers sulfur from IscS to the molybdenum cofactor prior to its insertion into FDH. This chain is Sulfur carrier protein FdhD, found in Mannheimia succiniciproducens (strain KCTC 0769BP / MBEL55E).